Reading from the N-terminus, the 151-residue chain is Large ribosomal subunit protein uL13 (151 aa).

The protein belongs to the universal ribosomal protein uL13 family. Part of the 50S ribosomal subunit.

Its function is as follows. This protein is one of the early assembly proteins of the 50S ribosomal subunit, although it is not seen to bind rRNA by itself. It is important during the early stages of 50S assembly. The polypeptide is Large ribosomal subunit protein uL13 (Acaryochloris marina (strain MBIC 11017)).